Consider the following 156-residue polypeptide: ATP synthase subunit b 2 (156 aa).

The helical transmembrane segment at 7 to 29 threads the bilayer; sequence LLGQAISFAIFVWFCMKYVWPPV.

It belongs to the ATPase B chain family. As to quaternary structure, F-type ATPases have 2 components, F(1) - the catalytic core - and F(0) - the membrane proton channel. F(1) has five subunits: alpha(3), beta(3), gamma(1), delta(1), epsilon(1). F(0) has three main subunits: a(1), b(2) and c(10-14). The alpha and beta chains form an alternating ring which encloses part of the gamma chain. F(1) is attached to F(0) by a central stalk formed by the gamma and epsilon chains, while a peripheral stalk is formed by the delta and b chains.

It localises to the cell inner membrane. Functionally, f(1)F(0) ATP synthase produces ATP from ADP in the presence of a proton or sodium gradient. F-type ATPases consist of two structural domains, F(1) containing the extramembraneous catalytic core and F(0) containing the membrane proton channel, linked together by a central stalk and a peripheral stalk. During catalysis, ATP synthesis in the catalytic domain of F(1) is coupled via a rotary mechanism of the central stalk subunits to proton translocation. Component of the F(0) channel, it forms part of the peripheral stalk, linking F(1) to F(0). This is ATP synthase subunit b 2 from Marinomonas sp. (strain MWYL1).